A 1275-amino-acid polypeptide reads, in one-letter code: Streptococcal hemoprotein receptor (1275 aa).

Residues 1 to 26 (MKKISKCAFVAISALVLIQATQTVKS) form the signal peptide. The segment at 61 to 123 (GKEYYKHIEK…KKDGDILITF (63 aa)) is HID 1. Heme-binding residues include Thr-87, Arg-196, Tyr-197, and Met-238. Positions 203 to 269 (IKALTQQITK…KGFEDVTITV (67 aa)) are HID 2. An NEAT 1 domain is found at 369 to 501 (LTEGTYTLNF…DMTFSKTVTK (133 aa)). 11 LRR repeats span residues 544–567 (LEQI…LKHA), 568–590 (KNIT…LFSQ), 592–614 (KQLR…TFKS), 616–638 (AQLR…LFQS), 639–662 (LHHL…PFEG), 664–686 (SRLT…ALEP), 687–710 (LTSL…IEKL), 712–733 (ALST…SFKN), 734–757 (LPKL…IFKQ), 759–781 (NQLT…VFPD), and 783–804 (ETLN…VRAL). An NEAT 2 domain is found at 976–1138 (LRDGIYYLNA…TTEKAKVVKE (163 aa)). Disordered stretches follow at residues 1137–1174 (KETN…SAAT), 1186–1205 (KATG…DKAE), and 1210–1248 (LVRD…ESSS). The segment covering 1138 to 1166 (ETNNPQENSHLTSTDQLKGPQNRQQEKTP) has biased composition (polar residues). Basic and acidic residues-rich tracts occupy residues 1196 to 1205 (SKTDDTDKAE) and 1210 to 1229 (LVRD…TKTK). Residues 1250–1269 (YHLIAGLSSFMIVALGFIIG) traverse the membrane as a helical segment.

The protein resides in the cell membrane. With respect to regulation, may modulate heme uptake according to heme availability. In the presence of high heme concentrations, NEAT 1 facilitates fast heme delivery to Shp, whereas NEAT 2 serves as a temporary storage for heme on the bacterial surface. When heme availability is limiting, heme from NEAT 2 is transferred back to NEAT 1 and from there to Shp. In terms of biological role, hemoprotein receptor that plays a central role in the acquisition of host heme, a source of iron during bacterial infection, and is therefore an important virulence factor. Captures host hemoproteins and their iron-containing heme molecules, and transfers the heme to the cell surface heme-binding protein Shp. Plays a pivotal role in iron acquisition and growth under iron-starvation conditions. Uses a cap and release mechanism in which Shr forms a dynamic complex with hemoglobin that enables the gated release of its most labile heme molecule. This mechanism exploits the hemoglobin beta subunit's inherent weaker affinity for heme, allowing S.pyogenes to preferentially capture only heme-saturated forms of hemoglobin that contain iron. In vitro, binds directly to a variety of heme-containing proteins, including hemoglobin, myoglobin, heme albumin and the hemoglobin-haptoglobin complex. It also binds to and acquires heme from methemoglobin, the ferric form of hemoglobin, which is likely to be a physiologically relevant heme source for the hemolytic group A streptococcus (GAS). Seems to have an inherent ability to reduce the ferric heme present in methemoglobin to ferrous heme and to provide a stable environment for the produced ferrous complex. Does not bind apohemoglobin, apohaptoglobin, fibrinogen or streptavidin, indicating that it specifically recognizes hemoproteins. Functionally, in addition to its role in heme acquisition, functions as an adhesin, contributing to host cell adhesion and hence virulence. Specifically binds to extracellular matrix (ECM) components, including fibronectin and laminin, and mediates bacterial attachment to host epithelial cells. The sequence is that of Streptococcal hemoprotein receptor from Streptococcus pyogenes serotype M1.